The sequence spans 253 residues: HTH-type transcriptional regulator YdeO (253 aa).

The 97-residue stretch at glycine 137–glutamate 233 folds into the HTH araC/xylS-type domain. 2 DNA-binding regions (H-T-H motif) span residues lysine 154 to glutamine 175 and valine 200 to phenylalanine 223.

Functionally, induces the expression of gadE and mdtEF. Could also regulate the expression of other genes involved in acid resistance. The chain is HTH-type transcriptional regulator YdeO from Escherichia coli O157:H7.